Reading from the N-terminus, the 353-residue chain is Protein RecA (353 aa).

67 to 74 (GPESSGKT) contacts ATP.

The protein belongs to the RecA family.

The protein resides in the cytoplasm. Its function is as follows. Can catalyze the hydrolysis of ATP in the presence of single-stranded DNA, the ATP-dependent uptake of single-stranded DNA by duplex DNA, and the ATP-dependent hybridization of homologous single-stranded DNAs. It interacts with LexA causing its activation and leading to its autocatalytic cleavage. The protein is Protein RecA of Chlamydia pneumoniae (Chlamydophila pneumoniae).